We begin with the raw amino-acid sequence, 282 residues long: MSRQTATALPTGTSKCPPSQRVPALTGTTASNNDLASLFECPVCFDYVLPPILQCQSGHLVCSNCRPKLTCCPTCRGPLGSIRNLAMEKVANSVLFPCKYASSGCEITLPHTEKAEHEELCEFRPYSCPCPGASCKWQGSLDAVMPHLMHQHKSITTLQGEDIVFLATDINLPGAVDWVMMQSCFGFHFMLVLEKQEKYDGHQQFFAIVQLIGTRKQAENFAYRLELNGHRRRLTWEATPRSIHEGIATAIMNSDCLVFDTSIAQLFAENGNLGINVTISMC.

Residues 1–17 (MSRQTATALPTGTSKCP) are compositionally biased toward polar residues. The interval 1–22 (MSRQTATALPTGTSKCPPSQRV) is disordered. Serine 19 is modified (phosphoserine; by ATM and ATR). The RING-type zinc-finger motif lies at 41–76 (CPVCFDYVLPPILQCQSGHLVCSNCRPKLTCCPTCR). The tract at residues 90 to 282 (VANSVLFPCK…LGINVTISMC (193 aa)) is SBD. Residues 93–153 (SVLFPCKYAS…VMPHLMHQHK (61 aa)) form an SIAH-type zinc finger. Zn(2+) is bound by residues cysteine 98, cysteine 105, histidine 117, cysteine 121, cysteine 128, cysteine 135, histidine 147, and histidine 152.

This sequence belongs to the SINA (Seven in absentia) family. Homodimer. Component of some large E3 complex composed of UBE2D1, SIAH1, CACYBP/SIP, SKP1, APC and TBL1X. Interacts with UBE2I. Interacts with alpha-tubulin. Interacts with PEG10, which may inhibit its activity. Interacts with PEG3 and HIPK2. Interacts with group 1 glutamate receptors GRM1 and GRM5. Interacts with DAB1, which may inhibit its activity. Interacts with UBE2E2. Interacts with SNCAIP. Interacts with HIPK2; the interaction is promoted by DAZAP2 and results in SIAH1-mediated ubiquitination and subsequent proteasomal degradation of HIPK2. Interacts with DAZAP2; the interaction is decreased following phosphorylation of DAZAP2 by HIPK2. Interacts with GAPDH; leading to stabilize SIAH1. Interacts with Bassoon/BSN and Piccolo/PLCO; these interactions negatively regulate SIAH1 E3 ligase activity. Interacts with DCC. Interacts with AXIN1; catalyzes AXIN1 ubiquitination and subsequent proteasome-mediated ubiquitin-dependent degradation. Post-translationally, phosphorylated on Ser-19 by ATM and ATR. This phosphorylation disrupts SIAH1 interaction with HIPK2, and subsequent proteasomal degradation of HIPK2.

It localises to the cytoplasm. The protein localises to the nucleus. The enzyme catalyses S-ubiquitinyl-[E2 ubiquitin-conjugating enzyme]-L-cysteine + [acceptor protein]-L-lysine = [E2 ubiquitin-conjugating enzyme]-L-cysteine + N(6)-ubiquitinyl-[acceptor protein]-L-lysine.. Its pathway is protein modification; protein ubiquitination. Its function is as follows. E3 ubiquitin-protein ligase that mediates ubiquitination and subsequent proteasomal degradation of target proteins. E3 ubiquitin ligases accept ubiquitin from an E2 ubiquitin-conjugating enzyme in the form of a thioester and then directly transfers the ubiquitin to targeted substrates. Mediates E3 ubiquitin ligase activity either through direct binding to substrates or by functioning as the essential RING domain subunit of larger E3 complexes. Triggers the ubiquitin-mediated degradation of many substrates, including proteins involved in transcription regulation (ELL2, MYB, POU2AF1, PML and RBBP8), a cell surface receptor (DCC), cytoplasmic signal transduction molecules (KLF10/TIEG1 and NUMB), an antiapoptotic protein (BAG1), a microtubule motor protein (KIF22), a protein involved in synaptic vesicle function in neurons (SYP), a structural protein (CTNNB1) and SNCAIP. Confers constitutive instability to HIPK2 through proteasomal degradation. It is thereby involved in many cellular processes such as apoptosis, tumor suppression, cell cycle, axon guidance, transcription, spermatogenesis and TNF-alpha signaling. Has some overlapping function with SIAH2. Induces apoptosis in cooperation with PEG3. Upon nitric oxid (NO) generation that follows apoptotic stimulation, interacts with S-nitrosylated GAPDH, mediating the translocation of GAPDH to the nucleus. GAPDH acts as a stabilizer of SIAH1, facilitating the degradation of nuclear proteins. Mediates ubiquitination and degradation of EGLN2 and EGLN3 in response to the unfolded protein response (UPR), leading to their degradation and subsequent stabilization of ATF4. Also part of the Wnt signaling pathway in which it mediates the Wnt-induced ubiquitin-mediated proteasomal degradation of AXIN1. This is E3 ubiquitin-protein ligase SIAH1 (Siah1) from Rattus norvegicus (Rat).